The primary structure comprises 413 residues: Eukaryotic initiation factor 4A-10 (413 aa).

The Q motif motif lies at 40–68; it reads DSFDAMGLQENLLRGIYAYGFEKPSAIQQ. Residues 71–241 form the Helicase ATP-binding domain; sequence IVPFCKGLDV…RKFMNKPVRI (171 aa). 84 to 91 lines the ATP pocket; the sequence is AQSGTGKT. The DEAD box signature appears at 189 to 192; that stretch reads DEAD. Residues 252–413 form the Helicase C-terminal domain; it reads GIKQFYVNVD…ELPANVADLL (162 aa).

This sequence belongs to the DEAD box helicase family. eIF4A subfamily. EIF4F is a multi-subunit complex, the composition of which varies with external and internal environmental conditions. It is composed of at least EIF4A, EIF4E and EIF4G.

The enzyme catalyses ATP + H2O = ADP + phosphate + H(+). ATP-dependent RNA helicase which is a subunit of the eIF4F complex involved in cap recognition and is required for mRNA binding to ribosome. In the current model of translation initiation, eIF4A unwinds RNA secondary structures in the 5'-UTR of mRNAs which is necessary to allow efficient binding of the small ribosomal subunit, and subsequent scanning for the initiator codon. This chain is Eukaryotic initiation factor 4A-10, found in Nicotiana tabacum (Common tobacco).